A 510-amino-acid chain; its full sequence is Histidine ammonia-lyase (510 aa).

The 5-imidazolinone (Ala-Gly) cross-link spans 143 to 145 (ASG). Ser144 is modified (2,3-didehydroalanine (Ser)).

It belongs to the PAL/histidase family. Contains an active site 4-methylidene-imidazol-5-one (MIO), which is formed autocatalytically by cyclization and dehydration of residues Ala-Ser-Gly.

The protein resides in the cytoplasm. The enzyme catalyses L-histidine = trans-urocanate + NH4(+). Its pathway is amino-acid degradation; L-histidine degradation into L-glutamate; N-formimidoyl-L-glutamate from L-histidine: step 1/3. The protein is Histidine ammonia-lyase of Photobacterium profundum (strain SS9).